A 488-amino-acid polypeptide reads, in one-letter code: UDP-N-acetylmuramate--L-alanine ligase (488 aa).

Residue G129–T135 participates in ATP binding.

The protein belongs to the MurCDEF family.

It is found in the cytoplasm. It carries out the reaction UDP-N-acetyl-alpha-D-muramate + L-alanine + ATP = UDP-N-acetyl-alpha-D-muramoyl-L-alanine + ADP + phosphate + H(+). It participates in cell wall biogenesis; peptidoglycan biosynthesis. Cell wall formation. This Prochlorococcus marinus (strain MIT 9303) protein is UDP-N-acetylmuramate--L-alanine ligase.